Reading from the N-terminus, the 654-residue chain is Tetratricopeptide repeat protein 30 homolog (654 aa).

TPR repeat units lie at residues 10 to 43, 44 to 76, 143 to 176, 178 to 210, 384 to 417, 449 to 483, and 533 to 566; these read EGHV…ANTR, AGLS…APKE, ADTL…GGFN, LVAY…GVRN, LAAK…YLPV, AVWR…HSDD, and CIVN…GAGG.

Belongs to the TTC30/dfy-1/fleer family.

It localises to the cell projection. The protein localises to the cilium. In terms of biological role, required for polyglutamylation of axonemal tubulin in sensory cilia. Plays a role in anterograde intraflagellar transport (IFT), the process by which cilia precursors are transported from the base of the cilium to the site of their incorporation at the tip. The protein is Tetratricopeptide repeat protein 30 homolog of Drosophila pseudoobscura pseudoobscura (Fruit fly).